Consider the following 192-residue polypeptide: Protein hunchback (192 aa).

Disordered stretches follow at residues 16-59 (SHHH…SNTN), 88-108 (AAMTPSPSNNDQNSPLTWPGL), and 151-192 (ALTP…KYMA). Residues 17–31 (HHHHHHHAHHSRRQH) show a composition bias toward basic residues. Residues 92-103 (PSPSNNDQNSPL) show a composition bias toward polar residues. Over residues 173–192 (EPEKEHDLMSNSSEDMKYMA) the composition is skewed to basic and acidic residues.

Belongs to the hunchback C2H2-type zinc-finger protein family.

It localises to the nucleus. In terms of biological role, gap class segmentation protein that controls development of head structures. The protein is Protein hunchback (hb) of Drosophila adiastola (Fruit fly).